The chain runs to 208 residues: Large ribosomal subunit protein uL3 (208 aa).

Position 149 is an N5-methylglutamine (Q149).

The protein belongs to the universal ribosomal protein uL3 family. In terms of assembly, part of the 50S ribosomal subunit. Forms a cluster with proteins L14 and L19. Methylated by PrmB.

In terms of biological role, one of the primary rRNA binding proteins, it binds directly near the 3'-end of the 23S rRNA, where it nucleates assembly of the 50S subunit. This chain is Large ribosomal subunit protein uL3, found in Actinobacillus succinogenes (strain ATCC 55618 / DSM 22257 / CCUG 43843 / 130Z).